Here is a 203-residue protein sequence, read N- to C-terminus: Histone deacetylase HDT4 (203 aa).

Residues 2 to 5 (EFWG) are required to repress transcription. The disordered stretch occupies residues 121 to 203 (AALPQNEINP…PFPCGPSCKK (83 aa)). Acidic residues predominate over residues 129-157 (NPEEDDESDSDEMGLDEDDDSSDEEDVEA). A compositionally biased stretch (basic residues) spans 180–193 (GGKKNKSSGGKKRC).

This sequence belongs to the histone deacetylase HD2 family. In terms of tissue distribution, confined to stems and flowers with young siliques.

The protein resides in the nucleus. It is found in the nucleolus. Functionally, probably mediates the deacetylation of lysine residues lysine residues on the N-terminal part of the core histones (H2A, H2B, H3 and H4). Histone deacetylation gives a tag for epigenetic repression and plays an important role in transcriptional regulation, cell cycle progression and developmental events. The protein is Histone deacetylase HDT4 (HDT4) of Arabidopsis thaliana (Mouse-ear cress).